The following is a 590-amino-acid chain: (+)-sabinene synthase, chloroplastic (590 aa).

Residues 1-51 constitute a chloroplast transit peptide; that stretch reads MSSISINIAMPLNSLHNFERKPSKAWSTSCTAPAARLRASSSLQQEKPHQI. The Mg(2+) site is built by D343, D347, D487, T491, and E495. The DDXXD motif motif lies at 343-347; sequence DDVYD.

Belongs to the terpene synthase family. In terms of assembly, monomer. Mg(2+) serves as cofactor.

The protein localises to the plastid. The protein resides in the chloroplast. The catalysed reaction is (2E)-geranyl diphosphate = (1R,5R)-sabinene + diphosphate. It functions in the pathway terpene metabolism; sabinene hydrate biosynthesis. Its function is as follows. Catalyzes the formation of the (-)-3-isothujone precursor sabinene from geranyl diphosphate. The enzyme also produces significant amounts of gamma-terpinene, terpinolene and limonene. This is (+)-sabinene synthase, chloroplastic from Salvia officinalis (Sage).